The primary structure comprises 317 residues: Ribosomal protein L11 methyltransferase (317 aa).

The S-adenosyl-L-methionine site is built by Thr162, Gly183, Asp205, and Asn248.

This sequence belongs to the methyltransferase superfamily. PrmA family.

Its subcellular location is the cytoplasm. It catalyses the reaction L-lysyl-[protein] + 3 S-adenosyl-L-methionine = N(6),N(6),N(6)-trimethyl-L-lysyl-[protein] + 3 S-adenosyl-L-homocysteine + 3 H(+). Its function is as follows. Methylates ribosomal protein L11. This Alkaliphilus metalliredigens (strain QYMF) protein is Ribosomal protein L11 methyltransferase.